The chain runs to 246 residues: Isoprenyl transferase (246 aa).

Asp18 is an active-site residue. Asp18 contacts Mg(2+). Substrate-binding positions include 19–22 (GNGR), Trp23, Arg31, His35, and 63–65 (SAE). The active-site Proton acceptor is Asn66. Residues Trp67, Arg69, Arg186, and 192–194 (RIS) contribute to the substrate site. Residue Glu205 participates in Mg(2+) binding.

This sequence belongs to the UPP synthase family. In terms of assembly, homodimer. The cofactor is Mg(2+).

In terms of biological role, catalyzes the condensation of isopentenyl diphosphate (IPP) with allylic pyrophosphates generating different type of terpenoids. In Geobacter sulfurreducens (strain ATCC 51573 / DSM 12127 / PCA), this protein is Isoprenyl transferase.